The sequence spans 495 residues: Serine/threonine-protein kinase F (495 aa).

Residues 46–314 enclose the Protein kinase domain; sequence YLPVKLLGQG…ASAEEVLAVL (269 aa). ATP contacts are provided by residues 52–60 and Lys77; that span reads LGQGGFGAA. The active-site Proton acceptor is the Asp187. The tract at residues 316–354 is disordered; it reads GGKGNQGKAPPGATVSTPQGTNTQIQPTPASSASPLTAP. Residues 329-350 show a composition bias toward polar residues; sequence TVSTPQGTNTQIQPTPASSASP.

The protein belongs to the protein kinase superfamily. Ser/Thr protein kinase family.

It catalyses the reaction L-seryl-[protein] + ATP = O-phospho-L-seryl-[protein] + ADP + H(+). It carries out the reaction L-threonyl-[protein] + ATP = O-phospho-L-threonyl-[protein] + ADP + H(+). In Synechocystis sp. (strain ATCC 27184 / PCC 6803 / Kazusa), this protein is Serine/threonine-protein kinase F (spkF).